A 342-amino-acid polypeptide reads, in one-letter code: Methylthioribose-1-phosphate isomerase (342 aa).

Substrate-binding positions include 49 to 51 (RGA), Arg86, and Gln187. The active-site Proton donor is Asp228. 238–239 (NK) provides a ligand contact to substrate.

Belongs to the eIF-2B alpha/beta/delta subunits family. MtnA subfamily.

The catalysed reaction is 5-(methylsulfanyl)-alpha-D-ribose 1-phosphate = 5-(methylsulfanyl)-D-ribulose 1-phosphate. It participates in amino-acid biosynthesis; L-methionine biosynthesis via salvage pathway; L-methionine from S-methyl-5-thio-alpha-D-ribose 1-phosphate: step 1/6. In terms of biological role, catalyzes the interconversion of methylthioribose-1-phosphate (MTR-1-P) into methylthioribulose-1-phosphate (MTRu-1-P). The sequence is that of Methylthioribose-1-phosphate isomerase from Enterobacter sp. (strain 638).